The following is a 333-amino-acid chain: Glycerol-3-phosphate dehydrogenase [NAD(P)+] (333 aa).

Positions 13, 33, and 108 each coordinate NADPH. K108 and G138 together coordinate sn-glycerol 3-phosphate. S142 serves as a coordination point for NADPH. K193, D246, S256, R257, and N258 together coordinate sn-glycerol 3-phosphate. The active-site Proton acceptor is K193. R257 contacts NADPH. Residues V281 and E283 each contribute to the NADPH site.

This sequence belongs to the NAD-dependent glycerol-3-phosphate dehydrogenase family.

The protein localises to the cytoplasm. It catalyses the reaction sn-glycerol 3-phosphate + NAD(+) = dihydroxyacetone phosphate + NADH + H(+). The enzyme catalyses sn-glycerol 3-phosphate + NADP(+) = dihydroxyacetone phosphate + NADPH + H(+). Its pathway is membrane lipid metabolism; glycerophospholipid metabolism. Catalyzes the reduction of the glycolytic intermediate dihydroxyacetone phosphate (DHAP) to sn-glycerol 3-phosphate (G3P), the key precursor for phospholipid synthesis. The protein is Glycerol-3-phosphate dehydrogenase [NAD(P)+] of Bifidobacterium longum (strain DJO10A).